We begin with the raw amino-acid sequence, 155 residues long: Small ribosomal subunit protein uS9 (155 aa).

Belongs to the universal ribosomal protein uS9 family.

The sequence is that of Small ribosomal subunit protein uS9 from Rhizobium meliloti (strain 1021) (Ensifer meliloti).